The primary structure comprises 378 residues: Tetraacyldisaccharide 4'-kinase (378 aa).

63–70 (AVGGAGKT) lines the ATP pocket.

The protein belongs to the LpxK family.

The enzyme catalyses a lipid A disaccharide + ATP = a lipid IVA + ADP + H(+). Its pathway is glycolipid biosynthesis; lipid IV(A) biosynthesis; lipid IV(A) from (3R)-3-hydroxytetradecanoyl-[acyl-carrier-protein] and UDP-N-acetyl-alpha-D-glucosamine: step 6/6. Its function is as follows. Transfers the gamma-phosphate of ATP to the 4'-position of a tetraacyldisaccharide 1-phosphate intermediate (termed DS-1-P) to form tetraacyldisaccharide 1,4'-bis-phosphate (lipid IVA). This chain is Tetraacyldisaccharide 4'-kinase, found in Anaeromyxobacter sp. (strain K).